The primary structure comprises 619 residues: MDDQQALNSIMQDLAVLHKASRPALSLQETRKAKSSSPKKQNDVRVKFEHRGEKRILQFPRPVKLEDLRSKAKIAFGQSMDLHYTNNELVIPLTTQDDLDKAVELLDRSIHMKSLKILLVINGSTQATNLEPLPSLEDLDNTVFGAERKKRLSIIGPTSRDRSSPPPGYIPDELHQVARNGSFTSINSEGEFIPESMDQMLDPLSLSSPENSGSGSCPSLDSPLDGESYPKSRMPRAQSYPDNHQEFSDYDNPIFEKFGKGGTYPRRYHVSYHHQEYNDGRKTFPRARRTQGTSLRSPVSFSPTDHSLSTSSGSSIFTPEYDDSRIRRRGSDIDNPTLTVMDISPPSRSPRAPTNWRLGKLLGQGAFGRVYLCYDVDTGRELAVKQVQFDPDSPETSKEVNALECEIQLLKNLLHERIVQYYGCLRDPQEKTLSIFMEYMPGGSIKDQLKAYGALTENVTRKYTRQILEGVHYLHSNMIVHRDIKGANILRDSTGNVKLGDFGASKRLQTICLSGTGMKSVTGTPYWMSPEVISGEGYGRKADIWSVACTVVEMLTEKPPWAEFEAMAAIFKIATQPTNPKLPPHVSDYTRDFLKRIFVEAKLRPSADELLRHMFVHYH.

A disordered region spans residues 25–45 (LSLQETRKAKSSSPKKQNDVR). The residue at position 26 (Ser-26) is a Phosphoserine. The region spanning 43–122 (DVRVKFEHRG…KSLKILLVIN (80 aa)) is the PB1 domain. Ser-153, Ser-159, and Ser-164 each carry phosphoserine. Disordered stretches follow at residues 154–173 (IIGPTSRDRSSPPPGYIPDE), 201–248 (LDPL…QEFS), and 289–355 (RTQG…APTN). Low complexity predominate over residues 203 to 219 (PLSLSSPENSGSGSCPS). Phosphoserine is present on residues Ser-239, Ser-297, Ser-311, Ser-331, Ser-344, and Ser-349. A compositionally biased stretch (polar residues) spans 290–299 (TQGTSLRSPV). Residues 300 to 315 (SFSPTDHSLSTSSGSS) show a composition bias toward low complexity. Residues 322–332 (DDSRIRRRGSD) show a composition bias toward basic and acidic residues. The region spanning 357-617 (RLGKLLGQGA…DELLRHMFVH (261 aa)) is the Protein kinase domain. Residues 362-371 (LGQGAFGRVY) and Lys-385 each bind ATP. Asp-483 acts as the Proton acceptor in catalysis.

This sequence belongs to the protein kinase superfamily. STE Ser/Thr protein kinase family. MAP kinase kinase kinase subfamily. As to quaternary structure, interacts with PKN2; the interaction activates PKN2 kinase activity in a MAP3K2-independent kinase activity. Self-associates. Binds both upstream activators and downstream substrates in multimolecular complexes. Interacts (via the kinase catalytic domain) with STK38. Interacts with XIAP/BIRC4. Requires Mg(2+) as cofactor. In terms of processing, autophosphorylated. Ubiquitination by XIAP/BIRC4 does not lead to proteasomal degradation.

The protein localises to the cytoplasm. It is found in the nucleus. It catalyses the reaction L-seryl-[protein] + ATP = O-phospho-L-seryl-[protein] + ADP + H(+). The catalysed reaction is L-threonyl-[protein] + ATP = O-phospho-L-threonyl-[protein] + ADP + H(+). With respect to regulation, activated by phosphorylation on Thr-524. Its function is as follows. Component of a protein kinase signal transduction cascade. Regulates the JNK and ERK5 pathways by phosphorylating and activating MAP2K5 and MAP2K7. Plays a role in caveolae kiss-and-run dynamics. The polypeptide is Mitogen-activated protein kinase kinase kinase 2 (MAP3K2) (Homo sapiens (Human)).